Consider the following 372-residue polypeptide: UDP-N-acetylglucosamine--N-acetylmuramyl-(pentapeptide) pyrophosphoryl-undecaprenol N-acetylglucosamine transferase (372 aa).

Residues 16 to 18 (TGG), Asn128, Arg164, Ser192, Ile250, and Gln295 each bind UDP-N-acetyl-alpha-D-glucosamine.

The protein belongs to the glycosyltransferase 28 family. MurG subfamily.

Its subcellular location is the cell inner membrane. The enzyme catalyses di-trans,octa-cis-undecaprenyl diphospho-N-acetyl-alpha-D-muramoyl-L-alanyl-D-glutamyl-meso-2,6-diaminopimeloyl-D-alanyl-D-alanine + UDP-N-acetyl-alpha-D-glucosamine = di-trans,octa-cis-undecaprenyl diphospho-[N-acetyl-alpha-D-glucosaminyl-(1-&gt;4)]-N-acetyl-alpha-D-muramoyl-L-alanyl-D-glutamyl-meso-2,6-diaminopimeloyl-D-alanyl-D-alanine + UDP + H(+). Its pathway is cell wall biogenesis; peptidoglycan biosynthesis. Functionally, cell wall formation. Catalyzes the transfer of a GlcNAc subunit on undecaprenyl-pyrophosphoryl-MurNAc-pentapeptide (lipid intermediate I) to form undecaprenyl-pyrophosphoryl-MurNAc-(pentapeptide)GlcNAc (lipid intermediate II). This is UDP-N-acetylglucosamine--N-acetylmuramyl-(pentapeptide) pyrophosphoryl-undecaprenol N-acetylglucosamine transferase from Paraburkholderia xenovorans (strain LB400).